We begin with the raw amino-acid sequence, 491 residues long: Aspartyl/glutamyl-tRNA(Asn/Gln) amidotransferase subunit B (491 aa).

This sequence belongs to the GatB/GatE family. GatB subfamily. As to quaternary structure, heterotrimer of A, B and C subunits.

The catalysed reaction is L-glutamyl-tRNA(Gln) + L-glutamine + ATP + H2O = L-glutaminyl-tRNA(Gln) + L-glutamate + ADP + phosphate + H(+). It carries out the reaction L-aspartyl-tRNA(Asn) + L-glutamine + ATP + H2O = L-asparaginyl-tRNA(Asn) + L-glutamate + ADP + phosphate + 2 H(+). Its function is as follows. Allows the formation of correctly charged Asn-tRNA(Asn) or Gln-tRNA(Gln) through the transamidation of misacylated Asp-tRNA(Asn) or Glu-tRNA(Gln) in organisms which lack either or both of asparaginyl-tRNA or glutaminyl-tRNA synthetases. The reaction takes place in the presence of glutamine and ATP through an activated phospho-Asp-tRNA(Asn) or phospho-Glu-tRNA(Gln). This is Aspartyl/glutamyl-tRNA(Asn/Gln) amidotransferase subunit B from Nostoc sp. (strain PCC 7120 / SAG 25.82 / UTEX 2576).